Consider the following 115-residue polypeptide: Gonadotropin subunit beta-2 (115 aa).

Cystine bridges form between Cys-6–Cys-54, Cys-20–Cys-69, Cys-23–Cys-107, Cys-31–Cys-85, Cys-35–Cys-87, and Cys-90–Cys-97. The N-linked (GlcNAc...) asparagine glycan is linked to Asn-10.

Belongs to the glycoprotein hormones subunit beta family. Heterodimer of an alpha and a beta chain.

It localises to the secreted. In terms of biological role, involved in gametogenesis and steroidogenesis. The chain is Gonadotropin subunit beta-2 (cgbb) from Thunnus obesus (Bigeye tuna).